Here is a 1673-residue protein sequence, read N- to C-terminus: NBPF family member NBPF26 (1673 aa).

4 EGF-like domains span residues 24–63 (HALQ…EYCQ), 64–102 (HRDP…EDCQ), 105–143 (TPHP…KECQ), and 144–180 (WTDA…QKCE). 17 cysteine pairs are disulfide-bonded: cysteine 28–cysteine 41, cysteine 35–cysteine 51, cysteine 53–cysteine 62, cysteine 68–cysteine 79, cysteine 73–cysteine 90, cysteine 92–cysteine 101, cysteine 109–cysteine 121, cysteine 115–cysteine 131, cysteine 133–cysteine 142, cysteine 148–cysteine 159, cysteine 153–cysteine 168, cysteine 170–cysteine 179, cysteine 186–cysteine 198, cysteine 192–cysteine 207, cysteine 209–cysteine 218, cysteine 225–cysteine 236, and cysteine 230–cysteine 246. The 38-residue stretch at 182 to 219 (DVNECDIPGHCQHGGTCLNLPGSYQCQCLQGFTGQYCD) folds into the EGF-like 5; calcium-binding domain. The EGF-like 6 domain occupies 221–258 (LYVPCAHSPCVNGGTCRQTGDFTFECNCLPVPDSTSSA). Residues 337-381 (RQFKEEKLAEQLKQAEELRQYKVLVHSQERELTQLKEKLREGRDA) are a coiled coil. Disordered regions lie at residues 423–463 (KLSP…KVPE), 713–734 (EKVQ…EVPE), and 782–828 (WEDA…EGYS). Over residues 427-443 (ENDEDEDEDVQVEEDEK) the composition is skewed to acidic residues. 13 consecutive Olduvai domains span residues 427 to 521 (ENDE…NILP), 698 to 790 (ENDN…HIIP), 791 to 879 (ENES…ATGP), 882 to 937 (SREL…VDMD), 938 to 1029 (EIEK…PSCP), 1032 to 1104 (SGEL…PSCP), 1107 to 1162 (SREL…LDVD), 1163 to 1255 (RIKK…RSKK), 1256 to 1348 (ERRR…PSCP), 1351 to 1423 (SREL…PSCP), 1426 to 1481 (SREL…LDVD), 1482 to 1574 (RIKK…RSKK), and 1575 to 1673 (ERRR…IFPQ). Residues 452 to 463 (EVQKTEESKVPE) are compositionally biased toward basic and acidic residues. Acidic residues-rich tracts occupy residues 792–801 (NESDDEEEEE) and 812–824 (ESEE…ESWD). Residues 1242-1280 (KGKGKKRRGRRSKKERRRGRKEGEEDQNPPCPRLSRELL) form a disordered region. The segment covering 1243–1261 (GKGKKRRGRRSKKERRRGR) has biased composition (basic residues). A disordered region spans residues 1561–1594 (KGKGKKRRGRRSKKERRRGRKEGEEDQNPPCPRL). The span at 1562–1580 (GKGKKRRGRRSKKERRRGR) shows a compositional bias: basic residues.

This sequence belongs to the NBPF family.

It localises to the cytoplasm. The protein is NBPF family member NBPF26 of Homo sapiens (Human).